Reading from the N-terminus, the 261-residue chain is MSDILDKIIAVKREEIAAALESAPLEELKVQASARDSRDFVGALRDKHAAGHAAVIAEVKKASPSKGVLREHFVPADIARSYAQHGAACLSVLTDERFFQGSARYLEQARAACALPVLRKDFIVDAYQVLEARAMGADAILLIAAALDTPLMIDLEAYAHSLGLAVLVEVHNRGELDEALKLKTPLVGINNRNLRTFETTIDTTLGMLDAIPDDRIVVTESGILSRADVERMEAAGVHTFLVGEAFMRAENPGAELARMFF.

It belongs to the TrpC family.

It carries out the reaction 1-(2-carboxyphenylamino)-1-deoxy-D-ribulose 5-phosphate + H(+) = (1S,2R)-1-C-(indol-3-yl)glycerol 3-phosphate + CO2 + H2O. Its pathway is amino-acid biosynthesis; L-tryptophan biosynthesis; L-tryptophan from chorismate: step 4/5. The chain is Indole-3-glycerol phosphate synthase from Burkholderia pseudomallei (strain 1106a).